The following is a 513-amino-acid chain: 2-isopropylmalate synthase (513 aa).

The region spanning Leu5–Val268 is the Pyruvate carboxyltransferase domain. The Mn(2+) site is built by Asp14, His202, His204, and Asn239. Positions Arg394 to Ile513 are regulatory domain.

The protein belongs to the alpha-IPM synthase/homocitrate synthase family. LeuA type 1 subfamily. Homodimer. Mn(2+) is required as a cofactor.

The protein resides in the cytoplasm. It carries out the reaction 3-methyl-2-oxobutanoate + acetyl-CoA + H2O = (2S)-2-isopropylmalate + CoA + H(+). Its pathway is amino-acid biosynthesis; L-leucine biosynthesis; L-leucine from 3-methyl-2-oxobutanoate: step 1/4. In terms of biological role, catalyzes the condensation of the acetyl group of acetyl-CoA with 3-methyl-2-oxobutanoate (2-ketoisovalerate) to form 3-carboxy-3-hydroxy-4-methylpentanoate (2-isopropylmalate). The chain is 2-isopropylmalate synthase from Cupriavidus pinatubonensis (strain JMP 134 / LMG 1197) (Cupriavidus necator (strain JMP 134)).